Here is a 369-residue protein sequence, read N- to C-terminus: Endophilin-A (369 aa).

The region spanning Thr-18 to Ser-248 is the BAR domain. A coiled-coil region spans residues Gln-227–Glu-247. The disordered stretch occupies residues Gly-266–Ala-295. Residues Pro-277–Pro-294 are compositionally biased toward low complexity. In terms of domain architecture, SH3 spans Gln-305–Pro-364.

Belongs to the endophilin family.

It localises to the cytoplasm. The protein localises to the membrane. Its function is as follows. Required presynaptically at the neuromuscular junction. Implicated in synaptic vesicle endocytosis. In Drosophila erecta (Fruit fly), this protein is Endophilin-A.